The sequence spans 122 residues: Large ribosomal subunit protein uL22 (122 aa).

Residues 102–122 are disordered; that stretch reads VAEGKEMKSSKSHKKNQAEGK.

This sequence belongs to the universal ribosomal protein uL22 family. In terms of assembly, part of the 50S ribosomal subunit.

In terms of biological role, this protein binds specifically to 23S rRNA; its binding is stimulated by other ribosomal proteins, e.g. L4, L17, and L20. It is important during the early stages of 50S assembly. It makes multiple contacts with different domains of the 23S rRNA in the assembled 50S subunit and ribosome. The globular domain of the protein is located near the polypeptide exit tunnel on the outside of the subunit, while an extended beta-hairpin is found that lines the wall of the exit tunnel in the center of the 70S ribosome. The polypeptide is Large ribosomal subunit protein uL22 (Helicobacter pylori (strain G27)).